Here is a 412-residue protein sequence, read N- to C-terminus: 2-methylacyl-CoA dehydrogenase, mitochondrial (412 aa).

A mitochondrion-targeting transit peptide spans 1–25; that stretch reads MHKLFAVRSLSSAIVKSFKSLQNQQ. Residues 154-163 and 187-189 contribute to the FAD site; these read LAMSEPNAGS and WCT. Ser163 lines the substrate pocket. Substrate-binding positions include 209 to 210, Tyr264, and 271 to 274; these read SK and DLER. The Proton acceptor role is filled by Glu273. FAD is bound by residues Arg299, Gln310, and 367–371; that span reads QCLGG. 394 to 395 is a substrate binding site; the sequence is AG. Residue 396–398 participates in FAD binding; sequence TSE.

The protein belongs to the acyl-CoA dehydrogenase family. In terms of assembly, homotetramer. Requires FAD as cofactor. Expressed in flowers.

The protein resides in the mitochondrion. The catalysed reaction is 2-methylbutanoyl-CoA + oxidized [electron-transfer flavoprotein] + H(+) = (2E)-2-methylbut-2-enoyl-CoA + reduced [electron-transfer flavoprotein]. Functionally, short/branched-chain acyl-CoA dehydrogenase (SBCAD). Uses 2-methylbutanoyl-CoA as substrate. Minor activity with the straight-chain substrates, butanoyl-CoA, valeryl-CoA, hexanoyl-CoA, and octanoyl-CoA but no activity with isovaleryl-CoA. This chain is 2-methylacyl-CoA dehydrogenase, mitochondrial (2MBCD), found in Solanum tuberosum (Potato).